The sequence spans 310 residues: Olfactory receptor 2A25 (310 aa).

The Extracellular segment spans residues 1 to 24 (MGGNQTSITEFLLLGFPIGPRIQM). N-linked (GlcNAc...) asparagine glycosylation is present at N4. The helical transmembrane segment at 25-48 (LLFGLFSLFYIFILLGNGTILGLI) threads the bilayer. Topologically, residues 49 to 56 (SLDSRLHT) are cytoplasmic. A helical transmembrane segment spans residues 57 to 78 (PMYFFLSHLAVVDIACACSTVP). The Extracellular portion of the chain corresponds to 79-99 (QMLVNLLHPAKPISFAGCMTQ). Residues C96 and C188 are joined by a disulfide bond. Residues 100–119 (MFLFLSFAHTECLLLVVMSY) traverse the membrane as a helical segment. Residues 120–138 (DRYVAICHPLRYSTIMTWK) are Cytoplasmic-facing. Residues 139–157 (VCITLALTSWILGVLLALV) form a helical membrane-spanning segment. Residues 158–195 (HLVLLLPLSFCGPQKLNHFFCEIMAVLKLACADTHINE) are Extracellular-facing. A helical membrane pass occupies residues 196–218 (VMVLAGAVSVLVGAFFSTVISYV). The Cytoplasmic segment spans residues 219 to 235 (HILCAILKIQSGEGCQK). Residues 236–258 (AFSICSSHLCVVGLFYGTAIIMY) form a helical membrane-spanning segment. The Extracellular segment spans residues 259 to 271 (VEPQYESPKEQKK). Residues 272 to 291 (YLLLFHSLFNPMLNPLIYSL) form a helical membrane-spanning segment. Residues 292–310 (RNKEVQGTLKRMLEKKRTS) are Cytoplasmic-facing.

Belongs to the G-protein coupled receptor 1 family.

Its subcellular location is the cell membrane. Its function is as follows. Odorant receptor. The polypeptide is Olfactory receptor 2A25 (OR2A25) (Homo sapiens (Human)).